A 402-amino-acid chain; its full sequence is 1-deoxy-D-xylulose 5-phosphate reductoisomerase (402 aa).

Residues T25, G26, S27, V28, R52, N53, and N136 each contribute to the NADPH site. K137 provides a ligand contact to 1-deoxy-D-xylulose 5-phosphate. E138 serves as a coordination point for NADPH. D162 serves as a coordination point for Mn(2+). Positions 163, 164, 188, and 211 each coordinate 1-deoxy-D-xylulose 5-phosphate. E164 is a Mn(2+) binding site. G217 is an NADPH binding site. 1-deoxy-D-xylulose 5-phosphate contacts are provided by S224, N229, K230, and E233. Mn(2+) is bound at residue E233.

Belongs to the DXR family. It depends on Mg(2+) as a cofactor. Mn(2+) serves as cofactor.

It carries out the reaction 2-C-methyl-D-erythritol 4-phosphate + NADP(+) = 1-deoxy-D-xylulose 5-phosphate + NADPH + H(+). Its pathway is isoprenoid biosynthesis; isopentenyl diphosphate biosynthesis via DXP pathway; isopentenyl diphosphate from 1-deoxy-D-xylulose 5-phosphate: step 1/6. Its function is as follows. Catalyzes the NADPH-dependent rearrangement and reduction of 1-deoxy-D-xylulose-5-phosphate (DXP) to 2-C-methyl-D-erythritol 4-phosphate (MEP). The polypeptide is 1-deoxy-D-xylulose 5-phosphate reductoisomerase (Rhodospirillum centenum (strain ATCC 51521 / SW)).